A 90-amino-acid chain; its full sequence is Probable Fe(2+)-trafficking protein (90 aa).

Belongs to the Fe(2+)-trafficking protein family.

Could be a mediator in iron transactions between iron acquisition and iron-requiring processes, such as synthesis and/or repair of Fe-S clusters in biosynthetic enzymes. This chain is Probable Fe(2+)-trafficking protein, found in Dechloromonas aromatica (strain RCB).